The primary structure comprises 652 residues: UvrABC system protein C (652 aa).

In terms of domain architecture, GIY-YIG spans 19-96 (KTSGVYLWKD…IKKHKPRYNI (78 aa)). Positions 203 to 238 (EDVSGTLKEKMKEAAEKKEFEKAARLRDGIQAVYAL) constitute a UVR domain.

The protein belongs to the UvrC family. In terms of assembly, interacts with UvrB in an incision complex.

Its subcellular location is the cytoplasm. Functionally, the UvrABC repair system catalyzes the recognition and processing of DNA lesions. UvrC both incises the 5' and 3' sides of the lesion. The N-terminal half is responsible for the 3' incision and the C-terminal half is responsible for the 5' incision. This chain is UvrABC system protein C, found in Treponema denticola (strain ATCC 35405 / DSM 14222 / CIP 103919 / JCM 8153 / KCTC 15104).